The following is a 1104-amino-acid chain: Carbamoyl phosphate synthase large chain (1104 aa).

A carboxyphosphate synthetic domain region spans residues 1-402 (MPRRTDLKSV…ALQKALRSTE (402 aa)). The ATP site is built by arginine 129, arginine 169, glycine 175, glycine 176, glutamate 208, isoleucine 210, glutamate 215, glycine 241, valine 242, histidine 243, glutamine 285, and glutamate 299. In terms of domain architecture, ATP-grasp 1 spans 133–328 (KGVVERCGAE…IAKIAARLAV (196 aa)). Mg(2+)-binding residues include glutamine 285, glutamate 299, and asparagine 301. The Mn(2+) site is built by glutamine 285, glutamate 299, and asparagine 301. The oligomerization domain stretch occupies residues 403–547 (KRGATFSWAG…YSSYDEEDET (145 aa)). Positions 548–948 (RPREKAAIVI…AFGKSQTAAY (401 aa)) are carbamoyl phosphate synthetic domain. Positions 676–867 (GQVLERAGLV…LAKAAARLMA (192 aa)) constitute an ATP-grasp 2 domain. The ATP site is built by arginine 712, arginine 751, leucine 753, glutamate 758, glycine 783, isoleucine 784, histidine 785, serine 786, glutamine 826, and glutamate 838. Residues glutamine 826, glutamate 838, and asparagine 840 each coordinate Mg(2+). Mn(2+)-binding residues include glutamine 826, glutamate 838, and asparagine 840. An MGS-like domain is found at 949-1099 (GGLPTAGTAF…QEHTARLNAA (151 aa)). Residues 949–1104 (GGLPTAGTAF…RLNAAWEGRA (156 aa)) form an allosteric domain region.

It belongs to the CarB family. In terms of assembly, composed of two chains; the small (or glutamine) chain promotes the hydrolysis of glutamine to ammonia, which is used by the large (or ammonia) chain to synthesize carbamoyl phosphate. Tetramer of heterodimers (alpha,beta)4. Mg(2+) is required as a cofactor. The cofactor is Mn(2+).

The enzyme catalyses hydrogencarbonate + L-glutamine + 2 ATP + H2O = carbamoyl phosphate + L-glutamate + 2 ADP + phosphate + 2 H(+). It catalyses the reaction hydrogencarbonate + NH4(+) + 2 ATP = carbamoyl phosphate + 2 ADP + phosphate + 2 H(+). The protein operates within amino-acid biosynthesis; L-arginine biosynthesis; carbamoyl phosphate from bicarbonate: step 1/1. Its pathway is pyrimidine metabolism; UMP biosynthesis via de novo pathway; (S)-dihydroorotate from bicarbonate: step 1/3. Functionally, large subunit of the glutamine-dependent carbamoyl phosphate synthetase (CPSase). CPSase catalyzes the formation of carbamoyl phosphate from the ammonia moiety of glutamine, carbonate, and phosphate donated by ATP, constituting the first step of 2 biosynthetic pathways, one leading to arginine and/or urea and the other to pyrimidine nucleotides. The large subunit (synthetase) binds the substrates ammonia (free or transferred from glutamine from the small subunit), hydrogencarbonate and ATP and carries out an ATP-coupled ligase reaction, activating hydrogencarbonate by forming carboxy phosphate which reacts with ammonia to form carbamoyl phosphate. The chain is Carbamoyl phosphate synthase large chain from Kineococcus radiotolerans (strain ATCC BAA-149 / DSM 14245 / SRS30216).